We begin with the raw amino-acid sequence, 410 residues long: 45 kDa immediate-early protein 2 (410 aa).

Residues 36 to 166 (SEEEQGEEVE…SKRISELDNE (131 aa)) form a disordered region. Low complexity-rich tracts occupy residues 47 to 67 (RGAT…TSPT), 90 to 101 (SSSSSSCSSASD), and 132 to 147 (AASS…SSGG). Residues 257-283 (VRCRLGTMCNLALSTPFLMEHTMPVTH) fold into a zinc finger.

Its function is as follows. Activates the E1.7 promoter. This activation is augmented by the IE1 protein. It down-regulates the transcription of genes under the control of the major IE promoter. The protein is 45 kDa immediate-early protein 2 (UL122) of Homo sapiens (Human).